A 58-amino-acid chain; its full sequence is UPF0434 protein NT01EI_2448 (58 aa).

The protein belongs to the UPF0434 family.

This is UPF0434 protein NT01EI_2448 from Edwardsiella ictaluri (strain 93-146).